The chain runs to 232 residues: Aprataxin-like protein (232 aa).

The HIT domain occupies 38–160 (LKVYIESPES…MTLDHVSPSL (123 aa)). 3 interaction with DNA regions span residues 63 to 67 (DMFPK), 138 to 149 (HAGPSMNNLHLH), and 161 to 165 (KNSAH). His-147 functions as the Nucleophile in the catalytic mechanism. 2 residues coordinate Zn(2+): Cys-200 and Cys-203. The tract at residues 209–212 (RHFT) is interaction with DNA. His-217 and Glu-221 together coordinate Zn(2+).

Monomer.

The protein resides in the nucleus. Its subcellular location is the cytoplasm. The catalysed reaction is a 5'-end adenosine-5'-diphospho-5'-2'-deoxyribonucleoside-DNA + H2O = a 5'-end 5'-phospho-2'-deoxyribonucleoside-DNA + AMP + 2 H(+). The enzyme catalyses a 5'-end adenosine-5'-diphospho-5'-ribonucleoside-2'-deoxyribonucleotide-DNA + H2O = a 5'-end 5'-phospho-ribonucleoside-2'-deoxyribonucleotide-DNA + AMP + 2 H(+). It carries out the reaction a 3'-end 2'-deoxyribonucleotide-3'-diphospho-5'-guanosine-DNA + H2O = a 3'-end 2'-deoxyribonucleotide 3'-phosphate-DNA + GMP + 2 H(+). DNA-binding protein involved in single-strand DNA break repair, double-strand DNA break repair and base excision repair. Resolves abortive DNA ligation intermediates formed either at base excision sites, or when DNA ligases attempt to repair non-ligatable breaks induced by reactive oxygen species. Catalyzes the release of adenylate groups covalently linked to 5'-phosphate termini, resulting in the production of 5'-phosphate termini that can be efficiently rejoined. Likewise, catalyzes the release of 3'-linked guanosine (DNAppG) and inosine (DNAppI) from DNA, but has higher specific activity with 5'-linked adenosine (AppDNA). The polypeptide is Aprataxin-like protein (hnt3) (Schizosaccharomyces pombe (strain 972 / ATCC 24843) (Fission yeast)).